We begin with the raw amino-acid sequence, 205 residues long: Recombination protein RecR (205 aa).

The C4-type zinc-finger motif lies at 64–79 (CRRCFNITVDELCPIC). The Toprim domain occupies 87–182 (TKICVVEEPL…RVTRPARGLP (96 aa)).

It belongs to the RecR family.

Its function is as follows. May play a role in DNA repair. It seems to be involved in an RecBC-independent recombinational process of DNA repair. It may act with RecF and RecO. This chain is Recombination protein RecR, found in Chloroflexus aggregans (strain MD-66 / DSM 9485).